The following is a 299-amino-acid chain: CRISPR system Cms protein Csm4 (299 aa).

This sequence belongs to the CRISPR-associated Csm4 family. Part of the Csm effector complex that includes at least Cas10(1), Csm2(3), Csm3(5), Csm4(1), Csm5(1) and mature crRNA. The Csm complex is elongated and slightly twisted with a maximal length of 215 Angstroms and a diameter of 75-80 Angstroms. It has been modeled to have a central protein filamant of Csm3 subunits along which the dsRNA helix of paired crRNA and target RNA binds. The filament is capped at one end by Cas10 and Csm4 and at the other end by Csm5; ssDNA is thought to bind to the N-terminal HD domain of Cas10. Csm with a precursor crRNA does not include Csm5, while Cas6, the enzyme probably involved in pre-crRNA processing, is found associated with a subset of the Csm complex.

In terms of biological role, CRISPR (clustered regularly interspaced short palindromic repeat) is an adaptive immune system that provides protection against mobile genetic elements (viruses, transposable elements and conjugative plasmids). CRISPR clusters contain spacers, sequences complementary to antecedent mobile elements, and target invading nucleic acids. CRISPR clusters are transcribed and processed into CRISPR RNA (crRNA). The type III-A Csm effector complex binds crRNA and acts as a crRNA-guided RNase, DNase and cyclic oligoadenylate synthase; binding of target RNA cognate to the crRNA is required for all activities. In a heterologous host this Csm effector complex restricts ssRNA phage MS2, suggesting it may target RNA viruses in vivo. Csm functions as a non-specific ssDNase. Base-pairing between crRNA and target RNA to form a ternary Csm complex activates a ssDNase activity; target RNA cleavage suppresses the ssDNase, a temporal control that prevents uncontrolled DNA degradation. Viral RNA transcripts probably tether the Csm complex to the viral genome, recruiting Cas10 ssDNA activity which is able to degrade DNA in the transcription bubble, spatially controlling the DNase activity. Functionally, the subunit probably binds to the 5' handle of the crRNA, helping in discrimination between self- and non-self. This is CRISPR system Cms protein Csm4 from Streptococcus thermophilus.